A 164-amino-acid polypeptide reads, in one-letter code: MTGPAVQDQELDQFDKKILDIIQTGFPLEPRPYAVIGDAVGLTEAEALARVRALKERKIIRRLGANFNSWKLGFRSTLCAAKVPEDKFDEFVAEVNSHVGVTHNYLRAHAYNVWFTFIGPSWEEVCSTLDSITQKTGIPILNLPAEELYKIRVDFKMDEDPAAD.

It belongs to the Ahb/Nir family. Forms a heterodimer composed of AhbA and AhbB.

It carries out the reaction siroheme + 2 H(+) = 12,18-didecarboxysiroheme + 2 CO2. It participates in porphyrin-containing compound metabolism; protoheme biosynthesis. Its function is as follows. Involved in siroheme-dependent heme b biosynthesis. Catalyzes the decarboxylation of siroheme into didecarboxysiroheme. In Oleidesulfovibrio alaskensis (strain ATCC BAA-1058 / DSM 17464 / G20) (Desulfovibrio alaskensis), this protein is Siroheme decarboxylase alpha subunit.